The chain runs to 486 residues: Palmitoyltransferase pfa4 (486 aa).

Topologically, residues 1 to 15 are cytoplasmic; that stretch reads MTNLQTGPTTRGLQR. A helical membrane pass occupies residues 16–36; that stretch reads FAIPAVCGLIIFLGYYSQYLF. The Lumenal segment spans residues 37-51; sequence NTSADLAPGPLTCRE. A helical transmembrane segment spans residues 52–72; that stretch reads SLIFNILLVCLWLTYYQACTV. Over 73–146 the chain is Cytoplasmic; sequence DPGQYKFPPK…NCVSLQTFPH (74 aa). The segment covering 81-91 has biased composition (basic and acidic residues); it reads PKEKEDGDNNN. The interval 81–101 is disordered; that stretch reads PKEKEDGDNNNKRGGRGPQKA. The region spanning 102-152 is the DHHC domain; that stretch reads KWCKKCDAPKPPRAHHCRHCARCIPRMDHHCPWTGNCVSLQTFPHFLRFLV. The active-site S-palmitoyl cysteine intermediate is the Cys-132. The helical transmembrane segment at 147 to 166 threads the bilayer; the sequence is FLRFLVYTNAALVYFARLLW. The Lumenal portion of the chain corresponds to 167–178; that stretch reads TRLYYGLWDQRH. The helical transmembrane segment at 179-201 threads the bilayer; it reads VPAYLGPSVGALLGCTMLSIAWF. The Cytoplasmic portion of the chain corresponds to 202-486; that stretch reads ATQFALMVLL…RKVKSNGVHE (285 aa). Residues 314-420 are disordered; it reads NDRVGMWPPP…QDGRAWMNSE (107 aa). 2 stretches are compositionally biased toward basic and acidic residues: residues 324–333 and 346–376; these read DPEKLRRERA and LNTEKPEVDYYRSSEDMKTAFKRRQQEDLRR. Residues 386–399 show a composition bias toward acidic residues; that stretch reads EEDEIMAELEEDEG.

This sequence belongs to the DHHC palmitoyltransferase family. PFA4 subfamily.

The protein localises to the endoplasmic reticulum membrane. The catalysed reaction is L-cysteinyl-[protein] + hexadecanoyl-CoA = S-hexadecanoyl-L-cysteinyl-[protein] + CoA. In terms of biological role, mediates the reversible addition of palmitate to target proteins, thereby regulating their membrane association and biological function. The chain is Palmitoyltransferase pfa4 from Neurospora crassa (strain ATCC 24698 / 74-OR23-1A / CBS 708.71 / DSM 1257 / FGSC 987).